The following is a 545-amino-acid chain: Glucose-6-phosphate isomerase (545 aa).

Catalysis depends on E351, which acts as the Proton donor. Residues H382 and K510 contribute to the active site.

This sequence belongs to the GPI family.

The protein localises to the cytoplasm. It catalyses the reaction alpha-D-glucose 6-phosphate = beta-D-fructose 6-phosphate. The protein operates within carbohydrate biosynthesis; gluconeogenesis. Its pathway is carbohydrate degradation; glycolysis; D-glyceraldehyde 3-phosphate and glycerone phosphate from D-glucose: step 2/4. Catalyzes the reversible isomerization of glucose-6-phosphate to fructose-6-phosphate. The chain is Glucose-6-phosphate isomerase from Shewanella amazonensis (strain ATCC BAA-1098 / SB2B).